Reading from the N-terminus, the 373-residue chain is Chemerin-like receptor 1 (373 aa).

Topologically, residues 1–41 (MRMEDEDYNTSISYGDEYPDYLDSIVVLEDLSPLEARVTRI) are extracellular. Asparagine 9 carries N-linked (GlcNAc...) asparagine glycosylation. A helical transmembrane segment spans residues 42–64 (FLVVVYSIVCFLGILGNGLVIII). Over 65–75 (ATFKMKKTVNM) the chain is Cytoplasmic. Residues 76 to 97 (VWFLNLAVADFLFNVFLPIHIT) form a helical membrane-spanning segment. Over 98–114 (YAAMDYHWVFGTAMCKI) the chain is Extracellular. The cysteines at positions 112 and 189 are disulfide-linked. The helical transmembrane segment at 115–135 (SNFLLIHNMFTSVFLLTIISS) threads the bilayer. Residues 136 to 154 (DRCISVLLPVWSQNHRSVR) lie on the Cytoplasmic side of the membrane. Residues 155–176 (LAYMACMVIWVLAFFLSSPSLV) traverse the membrane as a helical segment. Over 177-224 (FRDTANLHGKISCFNNFSLSTPGSSSWPTHSQMDPVGYSRHMVVTVTR) the chain is Extracellular. Asparagine 192 is a glycosylation site (N-linked (GlcNAc...) asparagine). The helical transmembrane segment at 225–245 (FLCGFLVPVLIITACYLTIVC) threads the bilayer. The Cytoplasmic segment spans residues 246–261 (KLQRNRLAKTKKPFKI). A helical transmembrane segment spans residues 262–282 (IVTIIITFFLCWCPYHTLNLL). The Extracellular portion of the chain corresponds to 283 to 300 (ELHHTAMPGSVFSLGLPL). The helical transmembrane segment at 301 to 320 (ATALAIANSCMNPILYVFMG) threads the bilayer. Over 321 to 373 (QDFKKFKVALFSRLVNALSEDTGHSSYPSHRSFTKMSSMNERTSMNERETGML) the chain is Cytoplasmic. A Phosphoserine modification is found at serine 339. Positions 341–373 (DTGHSSYPSHRSFTKMSSMNERTSMNERETGML) are disordered. A Phosphothreonine modification is found at threonine 342. Over residues 344-363 (HSSYPSHRSFTKMSSMNERT) the composition is skewed to polar residues. A phosphoserine mark is found at serine 349, serine 352, and serine 358. Positions 364-373 (SMNERETGML) are enriched in basic and acidic residues.

This sequence belongs to the chemokine-like receptor (CMKLR) family. As to expression, prominently expressed in developing osseous and cartilaginous tissue. Also found in adult parathyroid glands. Expressed in cardiovascular system, brain, kidney, gastrointestinal tissues and myeloid tissues. Expressed in a broad array of tissues associated with hematopoietic and immune function including, spleen, thymus, appendix, lymph node, bone marrow and fetal liver. Among leukocyte populations abundant expression in monocyte-derived macrophage and immature dendritic cells (DCs). High expression in blood monocytes and low levels in polymorphonuclear cells and T-cells. Expressed on endothelial cells. Highly expressed in differentiating adipocytes.

It is found in the cell membrane. Receptor for the chemoattractant adipokine chemerin/RARRES2 and for the omega-3 fatty acid derived molecule resolvin E1. Interaction with RARRES2 initiates activation of G proteins G(i)/G(o) and beta-arrestin pathways inducing cellular responses via second messenger pathways such as intracellular calcium mobilization, phosphorylation of MAP kinases MAPK1/MAPK3 (ERK1/2), TYRO3, MAPK14/P38MAPK and PI3K leading to multifunctional effects, like reduction of immune responses, enhancing of adipogenesis and angionesis. Resolvin E1 down-regulates cytokine production in macrophages by reducing the activation of MAPK1/3 (ERK1/2) and NF-kappa-B. Positively regulates adipogenesis and adipocyte metabolism. In terms of biological role, (Microbial infection) Acts as a coreceptor for several SIV strains (SIVMAC316, SIVMAC239, SIVMACL7E-FR and SIVSM62A), as well as a primary HIV-1 strain (92UG024-2). The protein is Chemerin-like receptor 1 of Homo sapiens (Human).